Here is a 936-residue protein sequence, read N- to C-terminus: Protocadherin alpha-5 (936 aa).

Residues 1–28 (MVYSRRGSLGSRLLLLWLLLAYWKAGSG) form the signal peptide. Residues 29–696 (QLHYSIPEEA…GPEAALVDVN (668 aa)) are Extracellular-facing. Cadherin domains follow at residues 33–132 (SIPE…PPRF), 156–241 (ASDL…APEF), 242–349 (DKSI…TPEM), 350–454 (AITT…LRAF), 455–564 (AQPQ…APAL), and 580–677 (VPRS…APKA). Residues N264, N448, and N547 are each glycosylated (N-linked (GlcNAc...) asparagine). A helical transmembrane segment spans residues 697–717 (VYLIIAICAVSSLLVLTLLLY). The Cytoplasmic portion of the chain corresponds to 718–936 (TALRCSAQPT…GNSTTDNSDQ (219 aa)). Disordered regions lie at residues 759–793 (SGEAPPKTDLMAFSPSLPQGPTSTDNPRQPNPDWR), 815–875 (RAGP…DKFI), and 887–936 (QEPA…NSDQ). PXXP repeat units lie at residues 773–776 (PSLP), 785–788 (PRQP), 818–821 (PGGP), 873–876 (KFII), and 877–890 (PGSPAIISIRQEPA). Residues 773–890 (PSLPQGPTST…AIISIRQEPA (118 aa)) are 5 X 4 AA repeats of P-X-X-P. The segment covering 774-786 (SLPQGPTSTDNPR) has biased composition (polar residues). Positions 895–909 (DKSDFITFGKKEETK) are enriched in basic and acidic residues.

The protein localises to the cell membrane. In terms of biological role, potential calcium-dependent cell-adhesion protein. May be involved in the establishment and maintenance of specific neuronal connections in the brain. The sequence is that of Protocadherin alpha-5 (PCDHA5) from Pan troglodytes (Chimpanzee).